We begin with the raw amino-acid sequence, 442 residues long: tRNA-2-methylthio-N(6)-dimethylallyladenosine synthase (442 aa).

Positions 5-122 (KKVFIKTLGC…LPEMIKRKQS (118 aa)) constitute an MTTase N-terminal domain. C14, C51, C85, C159, C163, and C166 together coordinate [4Fe-4S] cluster. The 234-residue stretch at 145–378 (KAEGAKAYVS…DLLNSNAQII (234 aa)) folds into the Radical SAM core domain. One can recognise a TRAM domain in the interval 380–442 (RQMVGTEQRI…LPNSLRGELI (63 aa)).

The protein belongs to the methylthiotransferase family. MiaB subfamily. As to quaternary structure, monomer. It depends on [4Fe-4S] cluster as a cofactor.

It localises to the cytoplasm. The enzyme catalyses N(6)-dimethylallyladenosine(37) in tRNA + (sulfur carrier)-SH + AH2 + 2 S-adenosyl-L-methionine = 2-methylsulfanyl-N(6)-dimethylallyladenosine(37) in tRNA + (sulfur carrier)-H + 5'-deoxyadenosine + L-methionine + A + S-adenosyl-L-homocysteine + 2 H(+). Its function is as follows. Catalyzes the methylthiolation of N6-(dimethylallyl)adenosine (i(6)A), leading to the formation of 2-methylthio-N6-(dimethylallyl)adenosine (ms(2)i(6)A) at position 37 in tRNAs that read codons beginning with uridine. This is tRNA-2-methylthio-N(6)-dimethylallyladenosine synthase from Francisella philomiragia subsp. philomiragia (strain ATCC 25017 / CCUG 19701 / FSC 153 / O#319-036).